The chain runs to 1687 residues: Zinc finger protein 142 (1687 aa).

Disordered regions lie at residues 1-23 and 83-150; these read MTDPLLDSQPASSTGEMDGLCPE and TLTP…RLEG. A compositionally biased stretch (basic and acidic residues) spans 125–140; sequence KEEKSDTQKDSQKAVD. Position 154 is a phosphoserine (Ser154). C2H2-type zinc fingers lie at residues 163–185, 219–242, and 253–275; these read HMCPECKRCFKKRTHLVEHLHLH, HHCPLCHYSAVERNALNRHMASMH, and YACPVCREEFRLSQALKEHLKSH. Residues 286–311 form a C2H2-type 4; atypical zinc finger; that stretch reads LRCFQEGCSYAAPDRKAFIKHLKETH. 10 C2H2-type zinc fingers span residues 316 to 340, 343 to 366, 372 to 395, 401 to 423, 429 to 451, 457 to 479, 485 to 507, 512 to 536, 544 to 567, and 573 to 596; these read VECRHHSCPMLFATAEAMEAHHKSH, FHCPHCDFACSNKHLFRKHKKQGH, LRCTFCPFATFNPVAYQDHVGKMH, HQCPECNFATAHKRVLIRHMLLH, HKCELCDFTCRDVSYLSKHMLTH, YMCTECGYVTKWKHYLRVHMRKH, YQCNQCSYRCHRADQLSSHKLRH, LMCEVCAFACKRKYELQKHMASQHH, YPCHYCSYQSRHKQAVLSHENCKH, and FHCALCDYRTFSNTTLLFHKRKAH. Lys594 participates in a covalent cross-link: Glycyl lysine isopeptide (Lys-Gly) (interchain with G-Cter in SUMO2). Disordered stretches follow at residues 613–690, 704–798, 897–935, 947–1014, and 1052–1092; these read EPEG…EVEE, LESV…PPLP, KGLPRPDSPIPLQPVLPGTQASEDTESGKPPPASQEAEL, REPE…SPTE, and GRGG…GDGD. A compositionally biased stretch (low complexity) spans 725 to 739; it reads PLGLEGPDGLEGPEL. Polar residues predominate over residues 1061–1075; sequence TPQTQPDVSPLSNGD. Residues 1082-1092 are compositionally biased toward low complexity; it reads GSTESSSGDGD. C2H2-type zinc fingers lie at residues 1135-1158, 1171-1194, 1200-1222, 1228-1251, 1257-1280, 1286-1309, 1328-1351, 1354-1377, 1380-1403, 1424-1446, 1452-1474, 1480-1502, 1508-1530, 1536-1559, and 1565-1587; these read LHCSLCPFTAPAATALRLHQKRRH, LQCGDCGFTCKQSRCMQQHRRLKH, HQCPFCDFSTTRRYRLEAHQSRH, IPCSSCPQTFGTNSKLRLHRLRVH, HFCPLCDYSGYLRHDITRHVNSCH, FACSQCEAQFSSETALKQHALRRH, LHCSRCGLLCPSPASLRGHTRKQH, LECGACQEAFPSRLALDEHRRQQH, HRCQLCDFAARERVGLVKHYLEQH, LHCPFCDFTCRHQLVLDHHVKGH, YKCTDCAYSTKNRQKITWHSRIH, YHCHLCPYACADPSRLKYHMRIH, YLCPECGYKCKWVNQLKYHMTKH, YQCPECEYCTNRADALRVHQETRH, and FMCEQCGKAFKTRFLLRTHLRKH. Residue Lys1193 forms a Glycyl lysine isopeptide (Lys-Gly) (interchain with G-Cter in SUMO2) linkage. Lys1242 is covalently cross-linked (Glycyl lysine isopeptide (Lys-Gly) (interchain with G-Cter in SUMO2)). A Glycyl lysine isopeptide (Lys-Gly) (interchain with G-Cter in SUMO2) cross-link involves residue Lys1591. 2 C2H2-type zinc fingers span residues 1593 to 1615 and 1621 to 1643; these read YVCNVCHRAFRWAAGLRHHALTH and FFCRLCNYKAKQKFQVVKHVRRH. Residues 1638–1687 form a disordered region; it reads KHVRRHHPDQADPNQGVGKDPTTPTVHLHDVQLEDPSPPAPAAPHTGPEG.

Belongs to the krueppel C2H2-type zinc-finger protein family.

It localises to the nucleus. May be involved in transcriptional regulation. The polypeptide is Zinc finger protein 142 (Homo sapiens (Human)).